We begin with the raw amino-acid sequence, 82 residues long: ATP synthase subunit c, chloroplastic (82 aa).

Transmembrane regions (helical) follow at residues 3-23 (PIVA…AAIG) and 57-77 (FAFM…LLFA).

This sequence belongs to the ATPase C chain family. In terms of assembly, F-type ATPases have 2 components, F(1) - the catalytic core - and F(0) - the membrane proton channel. F(1) has five subunits: alpha(3), beta(3), gamma(1), delta(1), epsilon(1). F(0) has four main subunits: a(1), b(1), b'(1) and c(10-14). The alpha and beta chains form an alternating ring which encloses part of the gamma chain. F(1) is attached to F(0) by a central stalk formed by the gamma and epsilon chains, while a peripheral stalk is formed by the delta, b and b' chains.

The protein resides in the plastid. The protein localises to the chloroplast thylakoid membrane. Its function is as follows. F(1)F(0) ATP synthase produces ATP from ADP in the presence of a proton or sodium gradient. F-type ATPases consist of two structural domains, F(1) containing the extramembraneous catalytic core and F(0) containing the membrane proton channel, linked together by a central stalk and a peripheral stalk. During catalysis, ATP synthesis in the catalytic domain of F(1) is coupled via a rotary mechanism of the central stalk subunits to proton translocation. Key component of the F(0) channel; it plays a direct role in translocation across the membrane. A homomeric c-ring of between 10-14 subunits forms the central stalk rotor element with the F(1) delta and epsilon subunits. The chain is ATP synthase subunit c, chloroplastic from Tetradesmus obliquus (Green alga).